The sequence spans 876 residues: MNEKYAALKSNVSMLGHLLGNTIRDAHGEELLAKVETIRKLSKTARAGSDNDRNALIEEIKSLPNDQLTPVARAFSQFLNLTNMAEQYHTISRHCEEHVCEPDAISSLFSKLSQNNISKLDTVQAVRELNIELVLTAHPTEIARRTMINKLVKINECLSKLELSDISFSEREKTERRLEQLIAQAWHSDVIRQERPTPLDEAKWGFAVVENSLWQGIPDFLREFDQRLENHLGEGLPIDARPVHMSSWMGGDRDGNPFVTHTITREVMLLSRWKAADLYLKDVNELISELSMVKCTDEVRKLAGDQHEPYRAILKQLRTLLNDTLENLDAQMKGELTNNKPILRNAEQLWLPLHACYQSLHACGMGIIAEGSLLDTLRRVKAFGAHLVRLDIRQESTRHSNVLSELTRYLGIGDYDQWSEQDKISFLVNELSSKRPLLPRDWTPTAEVQEVIDTCKIVAEQSKEALGSYVISMARTASDVLAVHLLLQEAGCPFRMDVCPLFETLDDLNRSKEVMEQLFSIDWYRGFIQNHQMVMIGYSDSAKDAGVMSAGWAQYSAMEALVDVCEKESIELTLFHGRGGTIGRGGAPAHAALLSQPPKSLKGGLRVTEQGEMIRFKLGLPEVAVNSFNLYASAILEANLLPPPEPKQEWRDLMEVLSEVSCEAYRNIVRGEKDFVPYFRAATPELELGKLPLGSRPAKRNPNGGVESLRAIPWIFSWSQNRLVLPAWLGAGEAIQYSIDKGHQELLEEMCREWPFFSTRLGMLEMVYTKCNPQMSEYYDQRLTDKSLWPLGVRLRNQLQADIKAVLNVENSDHLMESDPWGSESIRLRNIYVDPLNMLQAELLYRTRQQEETSPELEEALMVTIAGIAAGMRNTG.

Active-site residues include histidine 138 and lysine 543.

This sequence belongs to the PEPCase type 1 family. Mg(2+) serves as cofactor.

It carries out the reaction oxaloacetate + phosphate = phosphoenolpyruvate + hydrogencarbonate. In terms of biological role, forms oxaloacetate, a four-carbon dicarboxylic acid source for the tricarboxylic acid cycle. The chain is Phosphoenolpyruvate carboxylase from Aliivibrio salmonicida (strain LFI1238) (Vibrio salmonicida (strain LFI1238)).